A 127-amino-acid chain; its full sequence is Large ribosomal subunit protein bL12 (127 aa).

The protein belongs to the bacterial ribosomal protein bL12 family. As to quaternary structure, homodimer. Part of the ribosomal stalk of the 50S ribosomal subunit. Forms a multimeric L10(L12)X complex, where L10 forms an elongated spine to which 2 to 4 L12 dimers bind in a sequential fashion. Binds GTP-bound translation factors.

Forms part of the ribosomal stalk which helps the ribosome interact with GTP-bound translation factors. Is thus essential for accurate translation. In Streptococcus thermophilus (strain CNRZ 1066), this protein is Large ribosomal subunit protein bL12.